We begin with the raw amino-acid sequence, 473 residues long: Suppressor of SWI4 1 homolog (473 aa).

The Brix domain maps to 29-292 (PHSFVFTRGC…LIKVQEGVGE (264 aa)). Ser238 and Ser240 each carry phosphoserine. Residues 323-473 (AQRQAQQAQN…GRGRPGKRVA (151 aa)) form a disordered region. The span at 324–334 (QRQAQQAQNVQ) shows a compositional bias: low complexity. Basic and acidic residues predominate over residues 335–352 (RKQEQREAHRKKSLEGMK). At Ser359 the chain carries Phosphoserine. Residues 375-388 (LGEDDDEQEDDDIE) show a composition bias toward acidic residues. Residues 409–421 (KRLAKSPGRKRKR) are compositionally biased toward basic residues. Over residues 422–443 (WEMDRGRGRLCDQKFPKTKDKS) the composition is skewed to basic and acidic residues. Lys438 is modified (N6-acetyllysine). The segment covering 462–473 (GRGRGRPGKRVA) has biased composition (basic residues).

In terms of tissue distribution, widely expressed.

Its subcellular location is the nucleus. It localises to the nucleolus. Functionally, may have a role in cell growth. The chain is Suppressor of SWI4 1 homolog (PPAN) from Homo sapiens (Human).